Here is a 145-residue protein sequence, read N- to C-terminus: Deoxyuridine 5'-triphosphate nucleotidohydrolase (145 aa).

Substrate is bound by residues 65–67 (RSG), asparagine 78, 82–84 (TID), and methionine 92.

Belongs to the dUTPase family. Requires Mg(2+) as cofactor.

The catalysed reaction is dUTP + H2O = dUMP + diphosphate + H(+). It functions in the pathway pyrimidine metabolism; dUMP biosynthesis; dUMP from dCTP (dUTP route): step 2/2. In terms of biological role, this enzyme is involved in nucleotide metabolism: it produces dUMP, the immediate precursor of thymidine nucleotides and it decreases the intracellular concentration of dUTP so that uracil cannot be incorporated into DNA. The protein is Deoxyuridine 5'-triphosphate nucleotidohydrolase of Chlorobium phaeobacteroides (strain BS1).